A 306-amino-acid polypeptide reads, in one-letter code: MLKFILRRCLEAIPTLFILITISFFMMRLAPGSPFTGERALPPEVLANIEAKYHLNDPIMTQYFSYLKQLAHGDFGPSFKYKDYTVNDLVAASFPVSAKLGAAAFLLAVIIGVSAGVIAALKQNTRWDYTVMGFAMTGVVIPSFVVAPLLVMVFAITLQWLPGGGWNGGALKFMILPMVALSLAYIASIARITRGSMIEVLHSNFIRTARAKGLPMRRIIFRHALKPALLPVLSYMGPAFVGIITGSMVIETIYGLPGIGQLFVNGALNRDYSLVLSLTILVGALTILFNAIVDVLYAVIDPKIRY.

Over 1-12 the chain is Cytoplasmic; it reads MLKFILRRCLEA. Residues 13-30 traverse the membrane as a helical segment; the sequence is IPTLFILITISFFMMRLA. The Periplasmic portion of the chain corresponds to 31–101; sequence PGSPFTGERA…ASFPVSAKLG (71 aa). An ABC transmembrane type-1 domain is found at 94-293; sequence FPVSAKLGAA…ALTILFNAIV (200 aa). Residues 102–121 traverse the membrane as a helical segment; sequence AAAFLLAVIIGVSAGVIAAL. The Cytoplasmic portion of the chain corresponds to 122–133; the sequence is KQNTRWDYTVMG. The helical transmembrane segment at 134 to 156 threads the bilayer; the sequence is FAMTGVVIPSFVVAPLLVMVFAI. Topologically, residues 157-165 are periplasmic; the sequence is TLQWLPGGG. The chain crosses the membrane as a helical span at residues 166-188; sequence WNGGALKFMILPMVALSLAYIAS. Topologically, residues 189 to 227 are cytoplasmic; it reads IARITRGSMIEVLHSNFIRTARAKGLPMRRIIFRHALKP. The chain crosses the membrane as a helical span at residues 228-250; it reads ALLPVLSYMGPAFVGIITGSMVI. The Periplasmic portion of the chain corresponds to 251–277; it reads ETIYGLPGIGQLFVNGALNRDYSLVLS. The chain crosses the membrane as a helical span at residues 278-300; it reads LTILVGALTILFNAIVDVLYAVI. Over 301 to 306 the chain is Cytoplasmic; that stretch reads DPKIRY.

This sequence belongs to the binding-protein-dependent transport system permease family. OppBC subfamily. In terms of assembly, the complex is composed of two ATP-binding proteins (OppD and OppF), two transmembrane proteins (OppB and OppC) and a solute-binding protein (OppA).

The protein localises to the cell inner membrane. Its function is as follows. Part of the ABC transporter complex OppABCDF involved in the uptake of oligopeptides, including the cell wall murein tripeptide L-alanyl-gamma-D-glutamyl-meso-diaminopimelate. Responsible for the translocation of the substrate across the membrane. Plays an important nutritional role and is involved in the recycling of cell wall peptides. This chain is Oligopeptide transport system permease protein OppB, found in Salmonella typhimurium (strain LT2 / SGSC1412 / ATCC 700720).